A 310-amino-acid polypeptide reads, in one-letter code: Aspartate carbamoyltransferase catalytic subunit (310 aa).

Carbamoyl phosphate is bound by residues Arg58 and Thr59. Position 86 (Lys86) interacts with L-aspartate. Carbamoyl phosphate contacts are provided by Arg108, His137, and Gln140. L-aspartate-binding residues include Arg170 and Arg225. Carbamoyl phosphate contacts are provided by Gly264 and Pro265.

The protein belongs to the aspartate/ornithine carbamoyltransferase superfamily. ATCase family. In terms of assembly, heterododecamer (2C3:3R2) of six catalytic PyrB chains organized as two trimers (C3), and six regulatory PyrI chains organized as three dimers (R2).

It carries out the reaction carbamoyl phosphate + L-aspartate = N-carbamoyl-L-aspartate + phosphate + H(+). Its pathway is pyrimidine metabolism; UMP biosynthesis via de novo pathway; (S)-dihydroorotate from bicarbonate: step 2/3. In terms of biological role, catalyzes the condensation of carbamoyl phosphate and aspartate to form carbamoyl aspartate and inorganic phosphate, the committed step in the de novo pyrimidine nucleotide biosynthesis pathway. The sequence is that of Aspartate carbamoyltransferase catalytic subunit from Coxiella burnetii (strain CbuK_Q154) (Coxiella burnetii (strain Q154)).